The following is a 759-amino-acid chain: Catalase-peroxidase (759 aa).

Residues 1 to 24 are disordered; sequence MTQDKCPFKEQSSQPNFAGGGTSN. Positions 96 to 242 form a cross-link, tryptophyl-tyrosyl-methioninium (Trp-Tyr) (with M-268); the sequence is WHSAGTYRVF…LAAAHMGLIY (147 aa). Catalysis depends on His-97, which acts as the Proton acceptor. A cross-link (tryptophyl-tyrosyl-methioninium (Tyr-Met) (with W-96)) is located at residues 242–268; sequence YVNPEGPDGNPDPVAAAHDIRDTFGRM. Position 283 (His-283) interacts with heme b.

It belongs to the peroxidase family. Peroxidase/catalase subfamily. As to quaternary structure, homodimer or homotetramer. It depends on heme b as a cofactor. Formation of the three residue Trp-Tyr-Met cross-link is important for the catalase, but not the peroxidase activity of the enzyme.

It is found in the cytoplasm. It catalyses the reaction H2O2 + AH2 = A + 2 H2O. It carries out the reaction 2 H2O2 = O2 + 2 H2O. Functionally, bifunctional enzyme with both catalase and broad-spectrum peroxidase activity. The chain is Catalase-peroxidase from Aspergillus fumigatus (strain CBS 144.89 / FGSC A1163 / CEA10) (Neosartorya fumigata).